The chain runs to 299 residues: tRNA-cytidine(32) 2-sulfurtransferase (299 aa).

The PP-loop motif motif lies at 56–61 (SGGKDS). 3 residues coordinate [4Fe-4S] cluster: cysteine 131, cysteine 134, and cysteine 222.

Belongs to the TtcA family. As to quaternary structure, homodimer. Mg(2+) serves as cofactor. The cofactor is [4Fe-4S] cluster.

The protein localises to the cytoplasm. The catalysed reaction is cytidine(32) in tRNA + S-sulfanyl-L-cysteinyl-[cysteine desulfurase] + AH2 + ATP = 2-thiocytidine(32) in tRNA + L-cysteinyl-[cysteine desulfurase] + A + AMP + diphosphate + H(+). Its pathway is tRNA modification. Functionally, catalyzes the ATP-dependent 2-thiolation of cytidine in position 32 of tRNA, to form 2-thiocytidine (s(2)C32). The sulfur atoms are provided by the cysteine/cysteine desulfurase (IscS) system. The chain is tRNA-cytidine(32) 2-sulfurtransferase from Xylella fastidiosa (strain M23).